Consider the following 113-residue polypeptide: U11-theraphotoxin-Hhn1a (113 aa).

Positions Met1–Ala21 are cleaved as a signal peptide. A propeptide spanning residues Asp22–Arg74 is cleaved from the precursor. The segment at Glu61 to Asp83 is disordered. Cystine bridges form between Cys75–Cys90, Cys82–Cys95, and Cys89–Cys110.

It belongs to the neurotoxin 14 (magi-1) family. 01 (HNTX-16) subfamily. As to expression, expressed by the venom gland.

The protein localises to the secreted. Probable ion channel inhibitor. The sequence is that of U11-theraphotoxin-Hhn1a from Cyriopagopus hainanus (Chinese bird spider).